Consider the following 302-residue polypeptide: Deoxyhypusine hydroxylase (302 aa).

At M1 the chain carries N-acetylmethionine. HEAT-like PBS-type repeat units follow at residues 54 to 80 (LKHE…VLQD), 87 to 113 (VRHE…YSSD), 174 to 200 (ERYR…GLHC), 205 to 231 (FRHE…ALAR), and 238 to 264 (VRHE…HADD). Residues H56, H89, and E90 each coordinate Fe cation. Residues H207, H240, and E241 each coordinate Fe cation.

The protein belongs to the deoxyhypusine hydroxylase family. It depends on Fe(2+) as a cofactor.

The catalysed reaction is [eIF5A protein]-deoxyhypusine + AH2 + O2 = [eIF5A protein]-hypusine + A + H2O. The protein operates within protein modification; eIF5A hypusination. In terms of biological role, catalyzes the hydroxylation of the N(6)-(4-aminobutyl)-L-lysine intermediate produced by deoxyhypusine synthase/DHPS on a critical lysine of the eukaryotic translation initiation factor 5A/eIF-5A. This is the second step of the post-translational modification of that lysine into an unusual amino acid residue named hypusine. Hypusination is unique to mature eIF-5A factor and is essential for its function. This is Deoxyhypusine hydroxylase from Homo sapiens (Human).